Reading from the N-terminus, the 510-residue chain is ATP synthase subunit alpha 1 (510 aa).

An ATP-binding site is contributed by 169–176; that stretch reads GDRQTGKT.

This sequence belongs to the ATPase alpha/beta chains family. F-type ATPases have 2 components, CF(1) - the catalytic core - and CF(0) - the membrane proton channel. CF(1) has five subunits: alpha(3), beta(3), gamma(1), delta(1), epsilon(1). CF(0) has three main subunits: a(1), b(2) and c(9-12). The alpha and beta chains form an alternating ring which encloses part of the gamma chain. CF(1) is attached to CF(0) by a central stalk formed by the gamma and epsilon chains, while a peripheral stalk is formed by the delta and b chains.

It localises to the cell inner membrane. The enzyme catalyses ATP + H2O + 4 H(+)(in) = ADP + phosphate + 5 H(+)(out). Its function is as follows. Produces ATP from ADP in the presence of a proton gradient across the membrane. The alpha chain is a regulatory subunit. This Marinomonas sp. (strain MWYL1) protein is ATP synthase subunit alpha 1.